We begin with the raw amino-acid sequence, 137 residues long: Large ribosomal subunit protein uL16 (137 aa).

The protein belongs to the universal ribosomal protein uL16 family. Part of the 50S ribosomal subunit.

In terms of biological role, binds 23S rRNA and is also seen to make contacts with the A and possibly P site tRNAs. This is Large ribosomal subunit protein uL16 from Wolbachia pipientis subsp. Culex pipiens (strain wPip).